We begin with the raw amino-acid sequence, 214 residues long: UBX domain-containing protein 10 (214 aa).

Basic residues predominate over residues 1 to 13 (MHVTRPKSSKGRS). The interval 1–79 (MHVTRPKSSK…AYDRPPEEPV (79 aa)) is disordered. Residues 16-25 (MITNSSMIYT) are compositionally biased toward polar residues. A compositionally biased stretch (low complexity) spans 49–60 (SLRSRAILRRSS). The 78-residue stretch at 127–204 (PEESDLLLAI…GVLNKSVLCI (78 aa)) folds into the UBX domain.

This sequence belongs to the UBXN10 family.

It is found in the cell projection. It localises to the cilium. Its function is as follows. Required for ciliogenesis. Acts as a tethering factor that facilitates recruitment of vcp/p97 to the intraflagellar transport complex B (IFT-B) in cilia. This Danio rerio (Zebrafish) protein is UBX domain-containing protein 10.